The sequence spans 145 residues: MAKLITKNKQVFRDYEIIDKLEAGIVLQGWEVKSIRASDVNLKGSYCVFKANELYLINSYIGLYMAVKGDERQSRKLLLHKNQLRRLKQKVESQSLSIVPLSLYWNKKSKVKAEIALVRGLKKHDKREKLKKEETNKKLKKLISY.

This sequence belongs to the SmpB family.

Its subcellular location is the cytoplasm. Required for rescue of stalled ribosomes mediated by trans-translation. Binds to transfer-messenger RNA (tmRNA), required for stable association of tmRNA with ribosomes. tmRNA and SmpB together mimic tRNA shape, replacing the anticodon stem-loop with SmpB. tmRNA is encoded by the ssrA gene; the 2 termini fold to resemble tRNA(Ala) and it encodes a 'tag peptide', a short internal open reading frame. During trans-translation Ala-aminoacylated tmRNA acts like a tRNA, entering the A-site of stalled ribosomes, displacing the stalled mRNA. The ribosome then switches to translate the ORF on the tmRNA; the nascent peptide is terminated with the 'tag peptide' encoded by the tmRNA and targeted for degradation. The ribosome is freed to recommence translation, which seems to be the essential function of trans-translation. The sequence is that of SsrA-binding protein from Mycoplasmopsis pulmonis (strain UAB CTIP) (Mycoplasma pulmonis).